The primary structure comprises 1505 residues: Actin cytoskeleton-regulatory complex protein PAN1 (1505 aa).

Residues 1–30 (MFNSYQATGMGYNPNQQQQQPPPPQQQQQL) form a disordered region. Residues 85 to 174 (DQKKFEHLFR…QKWHNEVQSF (90 aa)) form the EH 1 domain. The region spanning 118-153 (LTPVVLAEIWTLSDIDKTGALLFPEFALSLHLCNMA) is the EF-hand 1 domain. 2 stretches are compositionally biased toward polar residues: residues 364–393 (ATGY…GYNF) and 403–413 (ATGLQRQPTGV). Disordered stretches follow at residues 364-416 (ATGY…VLQQ) and 422-441 (LQQQ…PGEW). Residues 492–581 (EKQIYDRLFQ…PELIPPADKT (90 aa)) enclose the EH 2 domain. Residues 525–560 (LGRQDLEAIWTLADTDDVGKLNKNQFAVAMHLIYRR) enclose the EF-hand 2 domain. A compositionally biased stretch (polar residues) spans 588-604 (SLKNSLKNGGAKQTRSK). Residues 588–620 (SLKNSLKNGGAKQTRSKPMTKPDGSRFKNDDSD) form a disordered region. The stretch at 677–752 (RTSDREVDAL…LVKLQLKRED (76 aa)) forms a coiled coil. Disordered stretches follow at residues 867–927 (EFAR…TYST) and 948–1505 (EKLG…GRVL). A compositionally biased stretch (polar residues) spans 872–885 (ADNTTTARSSSAYA). 3 stretches are compositionally biased toward basic and acidic residues: residues 960–980 (KAAE…EEPP), 1034–1050 (SQRE…EKQY), and 1069–1079 (SQEHIVKENAK). The segment covering 1086–1096 (QAPTSNYSQQP) has biased composition (polar residues). The span at 1109 to 1123 (RATETEQAESKKESE) shows a compositional bias: basic and acidic residues. A compositionally biased stretch (low complexity) spans 1133-1175 (AAASTEPAQPAQPAQASQASKPAQPAQPANSTEPASASASEQP). Residues 1193–1208 (VDTQKISMQRNFQRGT) are compositionally biased toward polar residues. Acidic residues predominate over residues 1216 to 1225 (DSEEEDSEDE). Basic and acidic residues predominate over residues 1261–1280 (PSKDEKSIGAENASGHESKM). Over residues 1283–1319 (ELSSSENTAAGVSQVNETPAQSSYEEPSLQEQSSYES) the composition is skewed to polar residues. Positions 1321–1330 (AVPAAPSLPE) are enriched in low complexity. Residues 1331 to 1453 (SVPPPAPAPE…SIPPPPPAPP (123 aa)) show a composition bias toward pro residues. Positions 1454–1472 (LSSNDSSLASAAAPPAGGA) are enriched in low complexity. A WH2 domain is found at 1474–1491 (NIGALLGQITGGKSLKKV).

The protein belongs to the PAN1 family. In terms of assembly, component of the PAN1 actin cytoskeleton-regulatory complex.

It localises to the cell membrane. The protein localises to the endosome membrane. Its subcellular location is the cytoplasm. The protein resides in the cytoskeleton. It is found in the actin patch. Component of the PAN1 actin cytoskeleton-regulatory complex required for the internalization of endosomes during actin-coupled endocytosis. The complex links the site of endocytosis to the cell membrane-associated actin cytoskeleton. Mediates uptake of external molecules and vacuolar degradation of plasma membrane proteins. Plays a role in the proper organization of the cell membrane-associated actin cytoskeleton and promotes its destabilization. The polypeptide is Actin cytoskeleton-regulatory complex protein PAN1 (PAN1) (Lodderomyces elongisporus (strain ATCC 11503 / CBS 2605 / JCM 1781 / NBRC 1676 / NRRL YB-4239) (Yeast)).